Here is a 193-residue protein sequence, read N- to C-terminus: MFKNTFQSGFLSILYSIGSKPLQIWDKKVRNGHIKRITDNDIQSLVLEVEGTNVSTTYITCPADPKKTLGIKLPFLVMIIKNLKKYFTFEVQVLDDKNVRRRFRASNYQSTTRVKPFICTMPMRLDDGWNQIQFNLSDFTRRAYGTNYIETLRVQIHANCRIRRVYFSDRLYSEDELPAEFKLYLPVQNKAKQ.

This sequence belongs to the CFAP20 family.

It localises to the nucleus. The protein resides in the cytoplasm. The protein localises to the cytoskeleton. Its subcellular location is the microtubule organizing center. It is found in the centrosome. It localises to the centriole. The protein resides in the cilium basal body. The protein localises to the cilium axoneme. Cilium- and flagellum-specific protein that plays a role in axonemal structure organization and motility. Microtubule inner protein (MIP) part of the dynein-decorated doublet microtubules (DMTs) in cilia axoneme, which is required for motile cilia beating. Involved in the regulation of the size and morphology of cilia. Required for axonemal microtubules polyglutamylation. The protein is Cilia- and flagella-associated protein 20 (cfap20) of Xenopus laevis (African clawed frog).